The following is an 85-amino-acid chain: Large ribosomal subunit protein eL43 (85 aa).

Residues Cys32, Cys35, Cys50, and Cys53 each contribute to the Zn(2+) site. The C4-type zinc finger occupies 32 to 53 (CTFCGKTKMKRRAVGIWHCGSC).

The protein belongs to the eukaryotic ribosomal protein eL43 family. In terms of assembly, component of the large ribosomal subunit.

It is found in the cytoplasm. In terms of biological role, component of the large ribosomal subunit. The ribosome is a large ribonucleoprotein complex responsible for the synthesis of proteins in the cell. This is Large ribosomal subunit protein eL43 (rpl37a) from Myxine glutinosa (Atlantic hagfish).